The primary structure comprises 97 residues: Glutamyl-tRNA(Gln) amidotransferase subunit C (97 aa).

It belongs to the GatC family. As to quaternary structure, heterotrimer of A, B and C subunits.

The catalysed reaction is L-glutamyl-tRNA(Gln) + L-glutamine + ATP + H2O = L-glutaminyl-tRNA(Gln) + L-glutamate + ADP + phosphate + H(+). The enzyme catalyses L-aspartyl-tRNA(Asn) + L-glutamine + ATP + H2O = L-asparaginyl-tRNA(Asn) + L-glutamate + ADP + phosphate + 2 H(+). Functionally, allows the formation of correctly charged Asn-tRNA(Asn) or Gln-tRNA(Gln) through the transamidation of misacylated Asp-tRNA(Asn) or Glu-tRNA(Gln) in organisms which lack either or both of asparaginyl-tRNA or glutaminyl-tRNA synthetases. The reaction takes place in the presence of glutamine and ATP through an activated phospho-Asp-tRNA(Asn) or phospho-Glu-tRNA(Gln). The sequence is that of Glutamyl-tRNA(Gln) amidotransferase subunit C from Sulfurisphaera tokodaii (strain DSM 16993 / JCM 10545 / NBRC 100140 / 7) (Sulfolobus tokodaii).